The chain runs to 632 residues: MTATPANSGSNPRKFSEKIALHNQKQAEETRAFDELMSDLTVSRVQFQKLQQLRLAQTRAQYYGGSLPNVNQISSSPNDFQPSFHPMDNIRGMRHHGLVERVSRNRLHSSHHRPVEKHGRQCDSSPYGSVYLSPPPDNNWRRTNSDSALHTSASSSKLQDAFMGGNQAMLRAPKPPQRNPSLQDGEMNNFGEAFSYPTSMTEENMLNVTKPLPKQIWEAQKVQCITSRPRSCEVPGIKVFPSSDSNASLSHYQGSLNTGGSLPDLTNLHFPSPLPTPLDPDDTVYANINAENSSGLPAAMTHLGISNSQGIQNTCSNPSIQATMNNNVNNHTPPGRNNPTLHPSLRLSSLSNPSLPTSALGSSPRRRHTPVSPLTLTPGSESNRSISNQFSPTSPMDMLPNSQGVSMDRCPLSLPPLEPPPPYPLYTDQPQPQLHHTQQQMHESPESQNFQPPSPVPCPPLDLNLANSSLSGFFGDSFFDQQQPTKQGKYLWQQQEQYDMFGSPSSSLPNTNAFFDPNMNLQYSQASLMGLGGSHGSLQDSFHLRPNYLYSNYGGSVPNIILTDDSSNSLSKDISNAVAGVSELGFDADNTFQFDDELKLGPLSLDGLSMLSDPDMVLPDPSIEDSFRSDKL.

Residue Ser-66 is modified to Phosphoserine. The span at 105–115 (NRLHSSHHRPV) shows a compositional bias: basic residues. The disordered stretch occupies residues 105 to 156 (NRLHSSHHRPVEKHGRQCDSSPYGSVYLSPPPDNNWRRTNSDSALHTSASSS). Ser-133 carries the phosphoserine modification. A Phosphoserine; by SIK2 modification is found at Ser-145. The segment covering 145 to 156 (SDSALHTSASSS) has biased composition (low complexity). Phosphothreonine is present on Thr-151. The residue at position 293 (Ser-293) is a Phosphoserine. The span at 310–338 (GIQNTCSNPSIQATMNNNVNNHTPPGRNN) shows a compositional bias: polar residues. Positions 310 to 455 (GIQNTCSNPS…ESQNFQPPSP (146 aa)) are disordered. The segment covering 339-360 (PTLHPSLRLSSLSNPSLPTSAL) has biased composition (low complexity). 2 positions are modified to phosphoserine: Ser-372 and Ser-391. Residues 372–405 (SPLTLTPGSESNRSISNQFSPTSPMDMLPNSQGV) show a composition bias toward polar residues. Positions 413-424 (SLPPLEPPPPYP) are enriched in pro residues. Low complexity predominate over residues 425-440 (LYTDQPQPQLHHTQQQ). At Ser-556 the chain carries Phosphoserine.

Belongs to the TORC family. In terms of assembly, binding, as a tetramer, through its N-terminal region, with the bZIP domain of creb1 enhances recruitment of taf4 to the promoter. 'Arg-300' in the bZIP domain of creb1 is essential for this interaction.

The protein resides in the nucleus. It is found in the cytoplasm. Transcriptional coactivator for creb1 which activates transcription through both consensus and variant cAMP response element (CRE) sites. Acts as a coactivator, in the SIK/TORC signaling pathway, being active when dephosphorylated and acts independently of creb1 'Ser-119' phosphorylation. Enhances the interaction of creb1 with taf4. Regulates the expression of specific CREB-activated genes such as the steroidogenic gene, StAR. Potent coactivator of ppargc1a and inducer of mitochondrial biogenesis in muscle cells. The protein is CREB-regulated transcription coactivator 3 (crtc3) of Xenopus laevis (African clawed frog).